The primary structure comprises 278 residues: 4-deoxy-L-threo-5-hexosulose-uronate ketol-isomerase (278 aa).

Positions 196, 198, 203, and 245 each coordinate Zn(2+).

It belongs to the KduI family. The cofactor is Zn(2+).

It catalyses the reaction 5-dehydro-4-deoxy-D-glucuronate = 3-deoxy-D-glycero-2,5-hexodiulosonate. Its pathway is glycan metabolism; pectin degradation; 2-dehydro-3-deoxy-D-gluconate from pectin: step 4/5. In terms of biological role, catalyzes the isomerization of 5-dehydro-4-deoxy-D-glucuronate to 3-deoxy-D-glycero-2,5-hexodiulosonate. The polypeptide is 4-deoxy-L-threo-5-hexosulose-uronate ketol-isomerase (Pectobacterium carotovorum subsp. carotovorum (Erwinia carotovora subsp. carotovora)).